The sequence spans 396 residues: Elongation factor Tu 1 (396 aa).

Residues 10–206 enclose the tr-type G domain; it reads KPHINVGTIG…VLDSYIPEPQ (197 aa). Residues 19 to 26 are G1; the sequence is GHVDHGKT. 19 to 26 contacts GTP; that stretch reads GHVDHGKT. Thr26 contributes to the Mg(2+) binding site. A G2 region spans residues 60 to 64; the sequence is GITIN. The interval 81–84 is G3; sequence DCPG. Residues 81 to 85 and 136 to 139 contribute to the GTP site; these read DCPGH and NKAD. Residues 136 to 139 form a G4 region; it reads NKAD. A G5 region spans residues 174–176; sequence SAL.

Belongs to the TRAFAC class translation factor GTPase superfamily. Classic translation factor GTPase family. EF-Tu/EF-1A subfamily. As to quaternary structure, monomer.

The protein resides in the cytoplasm. The catalysed reaction is GTP + H2O = GDP + phosphate + H(+). In terms of biological role, GTP hydrolase that promotes the GTP-dependent binding of aminoacyl-tRNA to the A-site of ribosomes during protein biosynthesis. In Nitrosomonas eutropha (strain DSM 101675 / C91 / Nm57), this protein is Elongation factor Tu 1.